Consider the following 409-residue polypeptide: Small ribosomal subunit protein mS47 (409 aa).

A mitochondrion-targeting transit peptide spans 1–26 (MQTVKALRRVSEPLQWVRSVSYGRRF). Residues 388-409 (ASELDDSDSELKLPTAQREPYF) are disordered.

Belongs to the enoyl-CoA hydratase/isomerase family. Mitochondrion-specific ribosomal protein mS47 subfamily. As to quaternary structure, component of the mitochondrial ribosome small subunit.

The protein localises to the mitochondrion. This is Small ribosomal subunit protein mS47 from Arabidopsis thaliana (Mouse-ear cress).